Here is a 1339-residue protein sequence, read N- to C-terminus: Receptor tyrosine-protein kinase erbB-3 (1339 aa).

Residues 1–19 (MSAIGTLQVLGFLLSLARG) form the signal peptide. Residues 20-641 (SEMGNSQAVC…QAEVLMSKPH (622 aa)) are Extracellular-facing. An N-linked (GlcNAc...) asparagine glycan is attached at N126. 11 disulfide bridges follow: C186–C194, C190–C202, C210–C218, C214–C226, C227–C235, C231–C243, C246–C255, C259–C286, C290–C301, C305–C320, and C323–C327. N250 carries N-linked (GlcNAc...) asparagine glycosylation. N-linked (GlcNAc...) asparagine glycans are attached at residues N353, N408, N414, N437, and N469. Cystine bridges form between C500–C509, C504–C517, C520–C529, C533–C549, C552–C565, C556–C573, C576–C585, C589–C610, C613–C621, and C617–C629. A glycan (N-linked (GlcNAc...) asparagine) is linked at N522. A glycan (N-linked (GlcNAc...) asparagine) is linked at N566. N616 is a glycosylation site (N-linked (GlcNAc...) asparagine). A helical membrane pass occupies residues 642–662 (LVIAVTVGLTVIFLILGGSFL). Topologically, residues 663–1339 (YWRGRRIQNK…LFPKANAQRI (677 aa)) are cytoplasmic. The residue at position 684 (S684) is a Phosphoserine. Residues 707–964 (LRKLKVLGSG…TFKELANEFT (258 aa)) form the Protein kinase domain. Residues 713–721 (LGSGVFGTV), K740, 786–788 (QYL), and 832–837 (DLALRN) each bind ATP. The Proton acceptor role is filled by D832. S980 carries the post-translational modification Phosphoserine. Disordered stretches follow at residues 1028-1052 (LSLP…SGYM), 1077-1156 (RPIS…GNGY), and 1181-1212 (SVLG…PRPG). Positions 1185-1195 (TEEEDEDEEYE) are enriched in acidic residues.

This sequence belongs to the protein kinase superfamily. Tyr protein kinase family. EGF receptor subfamily. As to quaternary structure, monomer and homodimer. Heterodimer with each of the other ERBB receptors (Potential). Interacts with CSPG5, PA2G4, GRB7 and MUC1. Interacts with MYOC. Found in a ternary complex with NRG1 and ITGAV:ITGB3 or ITGA6:ITGB4. Autophosphorylated. Ligand-binding increases phosphorylation on tyrosine residues and promotes its association with the p85 subunit of phosphatidylinositol 3-kinase. As to expression, in the muscle, expression localizes to the synaptic sites of muscle fibers.

It is found in the membrane. It catalyses the reaction L-tyrosyl-[protein] + ATP = O-phospho-L-tyrosyl-[protein] + ADP + H(+). In terms of biological role, tyrosine-protein kinase that plays an essential role as cell surface receptor for neuregulins. Binds to neuregulin-1 (NRG1) and is activated by it; ligand-binding increases phosphorylation on tyrosine residues and promotes its association with the p85 subunit of phosphatidylinositol 3-kinase. May also be activated by CSPG5. Involved in the regulation of myeloid cell differentiation. The chain is Receptor tyrosine-protein kinase erbB-3 (Erbb3) from Mus musculus (Mouse).